A 428-amino-acid chain; its full sequence is Adenylosuccinate synthetase (428 aa).

GTP contacts are provided by residues 11-17 (GDEGKGK) and 39-41 (GHT). Residue Asp-12 is the Proton acceptor of the active site. Residues Asp-12 and Gly-39 each contribute to the Mg(2+) site. IMP is bound by residues 12-15 (DEGK), 37-40 (NAGH), Thr-130, Arg-144, Asn-226, Thr-241, and Arg-305. His-40 acts as the Proton donor in catalysis. 301–307 (VTTGRKR) contributes to the substrate binding site. GTP is bound by residues Arg-307, 333–335 (KLD), and 415–417 (GTG).

This sequence belongs to the adenylosuccinate synthetase family. In terms of assembly, homodimer. It depends on Mg(2+) as a cofactor.

Its subcellular location is the cytoplasm. It carries out the reaction IMP + L-aspartate + GTP = N(6)-(1,2-dicarboxyethyl)-AMP + GDP + phosphate + 2 H(+). It participates in purine metabolism; AMP biosynthesis via de novo pathway; AMP from IMP: step 1/2. Its function is as follows. Plays an important role in the de novo pathway and in the salvage pathway of purine nucleotide biosynthesis. Catalyzes the first committed step in the biosynthesis of AMP from IMP. The sequence is that of Adenylosuccinate synthetase from Candida tropicalis (strain ATCC MYA-3404 / T1) (Yeast).